A 93-amino-acid polypeptide reads, in one-letter code: uncharacterized protein (93 aa).

Positions 25–68 (DIKKLSQVKSELEQGKALLEEEKKELIEKNSNLNLQISNMNHLK) form a coiled coil.

This is an uncharacterized protein from Dictyostelium discoideum (Social amoeba).